Here is a 966-residue protein sequence, read N- to C-terminus: Leucine--tRNA ligase (966 aa).

Residues 41–51 carry the 'HIGH' region motif; that stretch reads PYLNGNLHAGH. A 'KMSKS' region motif is present at residues 632–636; sequence KMSKS. Lys635 contributes to the ATP binding site.

The protein belongs to the class-I aminoacyl-tRNA synthetase family.

The protein localises to the cytoplasm. It carries out the reaction tRNA(Leu) + L-leucine + ATP = L-leucyl-tRNA(Leu) + AMP + diphosphate. The protein is Leucine--tRNA ligase of Methanosarcina mazei (strain ATCC BAA-159 / DSM 3647 / Goe1 / Go1 / JCM 11833 / OCM 88) (Methanosarcina frisia).